The following is a 423-amino-acid chain: NADH-quinone oxidoreductase subunit F (423 aa).

Position 54 to 63 (54 to 63 (GRGGAGFSTG)) interacts with NAD(+). 166–213 (GAGAYICGEETALLESLEGKKGMPRLKPPFPAGFGLYGCPTTINNVES) contacts FMN. Residues Cys-344, Cys-347, Cys-350, and Cys-390 each coordinate [4Fe-4S] cluster.

Belongs to the complex I 51 kDa subunit family. It depends on FMN as a cofactor. Requires [4Fe-4S] cluster as cofactor.

It catalyses the reaction a quinone + NADH + 5 H(+)(in) = a quinol + NAD(+) + 4 H(+)(out). In terms of biological role, NDH-1 shuttles electrons from NADH, via FMN and iron-sulfur (Fe-S) centers, to quinones in the respiratory chain. Couples the redox reaction to proton translocation (for every two electrons transferred, four hydrogen ions are translocated across the cytoplasmic membrane), and thus conserves the redox energy in a proton gradient. The polypeptide is NADH-quinone oxidoreductase subunit F (nuoF) (Rickettsia akari (strain Hartford)).